The sequence spans 167 residues: Large ribosomal subunit protein uL10 (167 aa).

This sequence belongs to the universal ribosomal protein uL10 family. As to quaternary structure, part of the ribosomal stalk of the 50S ribosomal subunit. The N-terminus interacts with L11 and the large rRNA to form the base of the stalk. The C-terminus forms an elongated spine to which L12 dimers bind in a sequential fashion forming a multimeric L10(L12)X complex.

Forms part of the ribosomal stalk, playing a central role in the interaction of the ribosome with GTP-bound translation factors. This Tolumonas auensis (strain DSM 9187 / NBRC 110442 / TA 4) protein is Large ribosomal subunit protein uL10.